Here is a 298-residue protein sequence, read N- to C-terminus: Ethanolamine ammonia-lyase small subunit (298 aa).

The disordered stretch occupies residues 15-43; that stretch reads ASMGQDVPQPVAPSTQEGAKPQRAAPTAT. 3 residues coordinate adenosylcob(III)alamin: V210, E231, and C261.

This sequence belongs to the EutC family. The basic unit is a heterodimer which dimerizes to form tetramers. The heterotetramers trimerize; 6 large subunits form a core ring with 6 small subunits projecting outwards. Adenosylcob(III)alamin serves as cofactor.

It localises to the bacterial microcompartment. It catalyses the reaction ethanolamine = acetaldehyde + NH4(+). The protein operates within amine and polyamine degradation; ethanolamine degradation. Functionally, catalyzes the deamination of various vicinal amino-alcohols to oxo compounds. Allows this organism to utilize ethanolamine as the sole source of nitrogen and carbon in the presence of external vitamin B12. This chain is Ethanolamine ammonia-lyase small subunit, found in Salmonella arizonae (strain ATCC BAA-731 / CDC346-86 / RSK2980).